Consider the following 292-residue polypeptide: RNA 5'-monophosphate methyltransferase (292 aa).

The segment at 1-22 (MAASTEQATGGVEKTAAEEKPR) is disordered. Residues Arg46, Asn76, Asp110, 135-136 (DF), and Met164 each bind S-adenosyl-L-methionine. A Bin3-type SAM domain is found at 53–274 (ELLRRLFPQS…KQATETHPIP (222 aa)).

Belongs to the methyltransferase superfamily. As to quaternary structure, interacts with DICER1; the interaction may be mediated by RNA.

It localises to the cytoplasm. It catalyses the reaction a 5'-end 5'-phospho-ribonucleoside-RNA + S-adenosyl-L-methionine = a 5'-end (5'-methylphospho)-ribonucleoside-RNA + S-adenosyl-L-homocysteine. The catalysed reaction is a 5'-end 5'-phospho-ribonucleoside-RNA + 2 S-adenosyl-L-methionine = a 5'-end (5'-bismethylphospho)-ribonucleoside-RNA + 2 S-adenosyl-L-homocysteine. Its function is as follows. O-methyltransferase that specifically monomethylates 5'-monophosphate of cytoplasmic histidyl tRNA (tRNA(His)), acting as a capping enzyme by protecting tRNA(His) from cleavage by DICER1. Also able, with less efficiently, to methylate the 5' monophosphate of a subset of pre-miRNAs, acting as a negative regulator of miRNA processing. The 5' monophosphate of pre-miRNAs is recognized by DICER1 and is required for pre-miRNAs processing: methylation at this position reduces the processing of pre-miRNAs by DICER1. Was also reported to mediate dimethylation of pre-miR-145; however dimethylation cannot be reproduced by another group which observes a monomethylation of pre-miR-145. The chain is RNA 5'-monophosphate methyltransferase (BCDIN3D) from Bos taurus (Bovine).